Reading from the N-terminus, the 323-residue chain is Beta-ketoacyl-[acyl-carrier-protein] synthase III (323 aa).

Catalysis depends on residues C113 and H250. The segment at 251 to 255 is ACP-binding; the sequence is QANKR. N280 is an active-site residue.

Belongs to the thiolase-like superfamily. FabH family. Homodimer.

It is found in the cytoplasm. It catalyses the reaction malonyl-[ACP] + acetyl-CoA + H(+) = 3-oxobutanoyl-[ACP] + CO2 + CoA. The protein operates within lipid metabolism; fatty acid biosynthesis. In terms of biological role, catalyzes the condensation reaction of fatty acid synthesis by the addition to an acyl acceptor of two carbons from malonyl-ACP. Catalyzes the first condensation reaction which initiates fatty acid synthesis and may therefore play a role in governing the total rate of fatty acid production. Possesses both acetoacetyl-ACP synthase and acetyl transacylase activities. Its substrate specificity determines the biosynthesis of branched-chain and/or straight-chain of fatty acids. The polypeptide is Beta-ketoacyl-[acyl-carrier-protein] synthase III (Brucella anthropi (strain ATCC 49188 / DSM 6882 / CCUG 24695 / JCM 21032 / LMG 3331 / NBRC 15819 / NCTC 12168 / Alc 37) (Ochrobactrum anthropi)).